The sequence spans 374 residues: Phenoloxidase-activating enzyme 1 (374 aa).

Positions 1–19 (MWKSLVFFVSALIWSFGSS) are cleaved as a signal peptide. Positions 20-120 (QDCTTPTGSR…QCGIDTTGDR (101 aa)) are cleaved as a propeptide — activation peptide. Residues 21 to 74 (DCTTPTGSRSNCVSLYQCQPLYNAFEQRPLPTHVVSYLGRSQCGFEGYVPRVCC) enclose the Clip domain. 3 disulfide bridges follow: C22–C73, C32–C63, and C38–C74. Polar residues predominate over residues 83-97 (ATSARPTQAPTQGSS). A disordered region spans residues 83 to 114 (ATSARPTQAPTQGSSDVFPEDSSPAPRNQCGI). Residues 121-370 (VYGGTITDLD…YIDWIQNTIA (250 aa)) enclose the Peptidase S1 domain. A disulfide bridge connects residues C151 and C167. Residue H166 is the Charge relay system of the active site. Ca(2+) contacts are provided by E186 and D194. The active-site Charge relay system is the D228. Intrachain disulfides connect C292–C307 and C317–C346. S321 (charge relay system) is an active-site residue.

The protein belongs to the peptidase S1 family. CLIP subfamily. In terms of processing, activated by the removal of the N-terminal inhibitory propeptide. As to expression, expressed in hemocytes.

The protein resides in the secreted. With respect to regulation, inhibited by aprotenin. Not inhibited by EDTA, PMSF or leupeptin. Serine protease which, by cleaving and activating prophenoloxidase (PPO1) after immune challenge, plays an essential role in the melanization immune response to wounding. This is Phenoloxidase-activating enzyme 1 from Spodoptera litura (Asian cotton leafworm).